A 357-amino-acid polypeptide reads, in one-letter code: DNA replication and repair protein RecF (357 aa).

ATP is bound at residue 30 to 37; it reads GANGSGKT.

It belongs to the RecF family.

Its subcellular location is the cytoplasm. Its function is as follows. The RecF protein is involved in DNA metabolism; it is required for DNA replication and normal SOS inducibility. RecF binds preferentially to single-stranded, linear DNA. It also seems to bind ATP. The sequence is that of DNA replication and repair protein RecF from Shigella dysenteriae serotype 1 (strain Sd197).